Reading from the N-terminus, the 133-residue chain is MAKASTSGASRVRKKVKKNVSDGIAHVHASFNNTIITITDRQGNALSWATSGGAGFKGSRKSTPFAAQVAAETAGRVALEYGIKTLEVRIKGPGPGRESSVRALNALGIKISSIADITPVPHNGCRPPKRRRI.

This sequence belongs to the universal ribosomal protein uS11 family. In terms of assembly, part of the 30S ribosomal subunit. Interacts with proteins S7 and S18. Binds to IF-3.

Its function is as follows. Located on the platform of the 30S subunit, it bridges several disparate RNA helices of the 16S rRNA. Forms part of the Shine-Dalgarno cleft in the 70S ribosome. This is Small ribosomal subunit protein uS11 from Bordetella petrii (strain ATCC BAA-461 / DSM 12804 / CCUG 43448).